Reading from the N-terminus, the 513-residue chain is MTGEKIRSLHRDQKPSKDEDLLEPDEEATADGTFTRTSKLKSSKMFSNHKVIRSPSNPALLQNHHHHHQQQISPMTPGESKTDVYFPVHECVIKGDIRKLSSLIRSHNIGQKDNHGNTPLHLAVMLGNKECAHLLLAHNAPVKVKNAQGWSPLAEAISYGDRQMITALLRKLKQQSRESVEEKRPRLLKALKELGDFYLELHWDFQSWVPLLSRILPSDACKIYKQGINIRLDTTLIDFTDMKCQRGDLSFIFNGDAAPSESFVVLDNEQKVYQRIHHEESEMETEEEVDILMSSDIYSATLSTKSITFSRAQTGWLFREDKTERVGNFLADFYTVNGLILESRKRREHLTEEDILRNKAIMESLSKGGNLMEQTFEPVRRPSLTPPPPNTITWEEYISAENGKAPHLGRELVCKENKKTFKATIAMSQDFPLEIESLLNVLEVIAPFKHFNKLREFVQMKLPPGFPVKLDIPVFPTITATVTFQEFHYGEFEDAIFTIPDDYKEDPSRFPDL.

Basic and acidic residues predominate over residues 1–19; the sequence is MTGEKIRSLHRDQKPSKDE. Disordered regions lie at residues 1 to 34 and 55 to 77; these read MTGE…DGTF and PSNP…PMTP. Residues 20 to 29 show a composition bias toward acidic residues; sequence DLLEPDEEAT. ANK repeat units follow at residues 83 to 114, 115 to 144, and 148 to 177; these read DVYF…QKDN, HGNT…PVKV, and QGWS…QQSR.

The protein localises to the endoplasmic reticulum membrane. Its function is as follows. Acts as a molecular chaperone for G protein-coupled receptors, regulating their biogenesis and exit from the ER. The sequence is that of Ankyrin repeat domain-containing protein 13C-B (ankrd13c-b) from Xenopus laevis (African clawed frog).